Consider the following 137-residue polypeptide: MVKLGFVIAEFNRDLTFMMEKLAEEHAAFLGADVSCKVMVPGSFDMPLAIKTLLQKDDIDAVVTIGCVIEGDTEHDEIVVQNAARKIADLSLEFGKPVALGIAGPGMTRMQAEDRIDYGKNAVEAAVKMVKRLKEIQ.

Residues phenylalanine 11, 43–45 (SFD), and 67–69 (CVI) contribute to the 5-amino-6-(D-ribitylamino)uracil site. (2S)-2-hydroxy-3-oxobutyl phosphate is bound at residue 72 to 73 (DT). Residue histidine 75 is the Proton donor of the active site. Leucine 100 lines the 5-amino-6-(D-ribitylamino)uracil pocket. Arginine 115 contacts (2S)-2-hydroxy-3-oxobutyl phosphate.

Belongs to the DMRL synthase family. In terms of assembly, forms an icosahedral capsid composed of 60 subunits, arranged as a dodecamer of pentamers.

The catalysed reaction is (2S)-2-hydroxy-3-oxobutyl phosphate + 5-amino-6-(D-ribitylamino)uracil = 6,7-dimethyl-8-(1-D-ribityl)lumazine + phosphate + 2 H2O + H(+). It functions in the pathway cofactor biosynthesis; riboflavin biosynthesis; riboflavin from 2-hydroxy-3-oxobutyl phosphate and 5-amino-6-(D-ribitylamino)uracil: step 1/2. Catalyzes the formation of 6,7-dimethyl-8-ribityllumazine by condensation of 5-amino-6-(D-ribitylamino)uracil with 3,4-dihydroxy-2-butanone 4-phosphate. This is the penultimate step in the biosynthesis of riboflavin. The protein is 6,7-dimethyl-8-ribityllumazine synthase of Methanococcus maripaludis (strain C5 / ATCC BAA-1333).